Reading from the N-terminus, the 3390-residue chain is Genome polyprotein (3390 aa).

An interaction with host EXOC1 region spans residues 1–15 (MNNQRKKTGKPSINM). At 1–100 (MNNQRKKTGK…MLSIINKRKK (100 aa)) the chain is on the cytoplasmic side. The tract at residues 37 to 72 (LLNGQGPMKLVMAFIAFLRFLAIPPTAGVLARWGTF) is hydrophobic; homodimerization of capsid protein C. Residues 101 to 114 (TSLCLMMMLPATLA) constitute a propeptide, ER anchor for the capsid protein C, removed in mature form by serine protease NS3. A helical transmembrane segment spans residues 101-118 (TSLCLMMMLPATLAFHLT). The Extracellular portion of the chain corresponds to 119 to 243 (SRDGEPRMIV…VEKVETWALR (125 aa)). Residue Asn183 is glycosylated (N-linked (GlcNAc...) asparagine; by host). The helical transmembrane segment at 244–264 (HPGFTILALFLAHYIGTSLTQ) threads the bilayer. Position 265 (Lys265) is a topological domain, cytoplasmic. Residues 266 to 280 (VVIFILLMLVTPSMT) form a helical membrane-spanning segment. At 281–723 (MRCVGVGNRD…VHQIFGSAYT (443 aa)) the chain is on the extracellular side. 4 disulfide bridges follow: Cys283–Cys310, Cys340–Cys401, Cys354–Cys385, and Cys372–Cys396. The N-linked (GlcNAc...) asparagine; by host glycan is linked to Asn347. A fusion peptide region spans residues 378 to 391 (DRGWGNGCGLFGKG). Asn433 carries N-linked (GlcNAc...) asparagine; by host glycosylation. 2 cysteine pairs are disulfide-bonded: Cys463/Cys563 and Cys580/Cys611. The chain crosses the membrane as a helical span at residues 724–744 (ALFSGVSWIMKIGIGVLLTWI). Residues 745–750 (GLNSKN) lie on the Cytoplasmic side of the membrane. A helical transmembrane segment spans residues 751–771 (TSMSFSCIAIGIITLYLGVVV). Topologically, residues 772–1193 (QADMGCVINW…MIGSNASDRM (422 aa)) are extracellular. Cystine bridges form between Cys777–Cys788, Cys828–Cys916, Cys952–Cys996, Cys1053–Cys1102, Cys1064–Cys1086, and Cys1085–Cys1089. N-linked (GlcNAc...) asparagine; by host glycosylation is found at Asn903 and Asn980. N-linked (GlcNAc...) asparagine; by host glycosylation is found at Asn1132 and Asn1188. A helical transmembrane segment spans residues 1194–1218 (GMGVTYLALIATFKIQPFLALGFFL). Residues 1219-1224 (RKLTSR) are Cytoplasmic-facing. Residues 1225-1243 (ENLLLGVGLAMAATLRLPE) traverse the membrane as a helical segment. Topologically, residues 1244 to 1267 (DIEQMANGIALGLMALKLITQFET) are lumenal. Residues 1268 to 1288 (YQLWTALVSLTCSNTIFTLTV) traverse the membrane as a helical segment. A topological domain (cytoplasmic) is located at residue Ala1289. The helical transmembrane segment at 1290-1308 (WRTATLILAGISLLPVCQS) threads the bilayer. Residues 1309–1315 (SSMRKTD) lie on the Lumenal side of the membrane. Residues 1316 to 1336 (WLPMTVAAMGVPPLPLFIFSL) form a helical membrane-spanning segment. Residues 1337–1344 (KDTLKRRS) lie on the Cytoplasmic side of the membrane. A helical membrane pass occupies residues 1345 to 1365 (WPLNEGVMAVGLVSILASSLL). Residues 1366 to 1368 (RND) are Lumenal-facing. A helical membrane pass occupies residues 1369-1389 (VPMAGPLVAGGLLIACYVITG). The Cytoplasmic portion of the chain corresponds to 1390–1443 (TSADLTVEKAADVTWEEEAEQTGVSHNLMITVDDDGTMRIKDDETENILTVLLK). The segment at 1396-1435 (VEKAADVTWEEEAEQTGVSHNLMITVDDDGTMRIKDDETE) is interacts with and activates NS3 protease. The helical intramembrane region spans 1444–1464 (TALLIVSGIFPCSIPATLLVW). Topologically, residues 1465-2146 (HTWQKQTQRS…VEELPETMET (682 aa)) are cytoplasmic. One can recognise a Peptidase S7 domain in the interval 1474 to 1651 (SGVLWDVPSP…NAEPDGPTPE (178 aa)). Residues His1524, Asp1548, and Ser1608 each act as charge relay system; for serine protease NS3 activity in the active site. The 157-residue stretch at 1654-1810 (EEMFKKRNLT…QSNAPIQDEE (157 aa)) folds into the Helicase ATP-binding domain. The tract at residues 1658 to 1661 (KKRN) is important for RNA-binding. 1667–1674 (LHPGSGKT) contributes to the ATP binding site. The DEAH box motif lies at 1758–1761 (DEAH). One can recognise a Helicase C-terminal domain in the interval 1821 to 1986 (GNEWITDFVG…GIIPALFEPE (166 aa)). Residue Lys1862 is modified to N6-acetyllysine; by host. Residues 2147 to 2167 (LLLLGLMILLTGGAMLFLISG) form a helical membrane-spanning segment. Topologically, residues 2168–2169 (KG) are lumenal. An intramembrane region (helical) is located at residues 2170–2190 (IGKTSIGLICVIASSGMLWMA). Residue Asp2191 is a topological domain, lumenal. Residues 2192–2212 (VPLQWIASAIVLEFFMMVLLI) traverse the membrane as a helical segment. Residues 2213–2227 (PEPEKQRTPQDNQLA) are Cytoplasmic-facing. Residues 2228–2248 (YVVIGILTLAAIVAANEMGLL) traverse the membrane as a helical segment. The Lumenal segment spans residues 2249 to 2273 (ETTKRDLGMSKEPGVVSPTSYLDVD). Positions 2274-2294 (LHPASAWTLYAVATTVITPML) form an intramembrane region, helical. The Lumenal portion of the chain corresponds to 2295 to 2305 (RHTIENSTANV). Asn2300 and Asn2304 each carry an N-linked (GlcNAc...) asparagine; by host glycan. An intramembrane region (helical) is located at residues 2306 to 2326 (SLAAIANQAVVLMGLDKGWPI). The Lumenal portion of the chain corresponds to 2327 to 2346 (SKMDLGVPLLALGCYSQVNP). Residues 2347-2367 (LTLIAAVLLLVTHYAIIGPGL) form a helical membrane-spanning segment. Over 2368–2412 (QAKATREAQKRTAAGIMKNPTVDGIMTIDLDPVIYDSKFEKQLGQ) the chain is Cytoplasmic. The chain crosses the membrane as a helical span at residues 2413–2433 (VMLLVLCAVQLLLMRTSWALC). Topologically, residues 2434–2458 (EVLTLATGPITTLWEGSPGKFWNTT) are lumenal. The N-linked (GlcNAc...) asparagine; by host glycan is linked to Asn2456. Residues 2459–2479 (IAVSMANIFRGSYLAGAGLAF) form a helical membrane-spanning segment. Over 2480 to 3390 (SIMKSVGTGK…KEEESEGAIW (911 aa)) the chain is Cytoplasmic. In terms of domain architecture, mRNA cap 0-1 NS5-type MT spans 2492 to 2753 (TGSQGETLGE…DVDLGAGTRH (262 aa)). Ser2546 provides a ligand contact to S-adenosyl-L-methionine. Ser2546 bears the Phosphoserine mark. Catalysis depends on Lys2551, which acts as the For 2'-O-MTase activity. The SUMO-interacting motif signature appears at 2567 to 2570 (VIDL). S-adenosyl-L-methionine-binding residues include Gly2576, Trp2577, Thr2594, Lys2595, Asp2621, and Val2622. Catalysis depends on Asp2636, which acts as the For 2'-O-MTase activity. Residue Ile2637 participates in S-adenosyl-L-methionine binding. Catalysis depends on for 2'-O-MTase activity residues Lys2670 and Glu2706. Tyr2708 contacts S-adenosyl-L-methionine. Residues Glu2927, His2931, Cys2936, and Cys2939 each contribute to the Zn(2+) site. The RdRp catalytic domain maps to 3018–3168 (AMYADDTAGW…PIDDRFANAL (151 aa)). His3202, Cys3218, and Cys3337 together coordinate Zn(2+).

In the N-terminal section; belongs to the class I-like SAM-binding methyltransferase superfamily. mRNA cap 0-1 NS5-type methyltransferase family. As to quaternary structure, homodimer. Interacts (via N-terminus) with host EXOC1 (via C-terminus); this interaction results in EXOC1 degradation through the proteasome degradation pathway. In terms of assembly, forms heterodimers with envelope protein E in the endoplasmic reticulum and Golgi. Homodimer; in the endoplasmic reticulum and Golgi. Interacts with protein prM. Interacts with non-structural protein 1. As to quaternary structure, homodimer; Homohexamer when secreted. Interacts with envelope protein E. In terms of assembly, interacts (via N-terminus) with serine protease NS3. Forms a heterodimer with serine protease NS3. May form homooligomers. As to quaternary structure, forms a heterodimer with NS2B. Interacts with NS4B. Interacts with unphosphorylated RNA-directed RNA polymerase NS5; this interaction stimulates RNA-directed RNA polymerase NS5 guanylyltransferase activity. In terms of assembly, interacts with host MAVS; this interaction inhibits the synthesis of IFN-beta. Interacts with host AUP1; the interaction occurs in the presence of Dengue virus NS4B and induces lipophagy which facilitates production of virus progeny particles. Interacts with serine protease NS3. As to quaternary structure, homodimer. Interacts with host STAT2; this interaction inhibits the phosphorylation of the latter, and, when all viral proteins are present (polyprotein), targets STAT2 for degradation. Interacts with serine protease NS3. Post-translationally, specific enzymatic cleavages in vivo yield mature proteins. Cleavages in the lumen of endoplasmic reticulum are performed by host signal peptidase, whereas cleavages in the cytoplasmic side are performed by serine protease NS3. Signal cleavage at the 2K-4B site requires a prior NS3 protease-mediated cleavage at the 4A-2K site. Cleaved in post-Golgi vesicles by a host furin, releasing the mature small envelope protein M, and peptide pr. This cleavage is incomplete as up to 30% of viral particles still carry uncleaved prM. In terms of processing, N-glycosylated. Post-translationally, N-glycosylated. The excreted form is glycosylated and this is required for efficient secretion of the protein from infected cells. Acetylated by host KAT5. Acetylation modulates NS3 RNA-binding and unwinding activities and plays an important positive role for viral replication. In terms of processing, sumoylation of RNA-directed RNA polymerase NS5 increases NS5 protein stability allowing proper viral RNA replication. Post-translationally, phosphorylated on serines residues. This phosphorylation may trigger NS5 nuclear localization.

It is found in the virion. Its subcellular location is the host nucleus. The protein localises to the host cytoplasm. The protein resides in the host perinuclear region. It localises to the secreted. It is found in the virion membrane. Its subcellular location is the host endoplasmic reticulum membrane. The protein localises to the host mitochondrion. It carries out the reaction Selective hydrolysis of -Xaa-Xaa-|-Yaa- bonds in which each of the Xaa can be either Arg or Lys and Yaa can be either Ser or Ala.. The enzyme catalyses RNA(n) + a ribonucleoside 5'-triphosphate = RNA(n+1) + diphosphate. The catalysed reaction is a ribonucleoside 5'-triphosphate + H2O = a ribonucleoside 5'-diphosphate + phosphate + H(+). It catalyses the reaction ATP + H2O = ADP + phosphate + H(+). It carries out the reaction a 5'-end (5'-triphosphoguanosine)-ribonucleoside in mRNA + S-adenosyl-L-methionine = a 5'-end (N(7)-methyl 5'-triphosphoguanosine)-ribonucleoside in mRNA + S-adenosyl-L-homocysteine. The enzyme catalyses a 5'-end (N(7)-methyl 5'-triphosphoguanosine)-ribonucleoside in mRNA + S-adenosyl-L-methionine = a 5'-end (N(7)-methyl 5'-triphosphoguanosine)-(2'-O-methyl-ribonucleoside) in mRNA + S-adenosyl-L-homocysteine + H(+). In terms of biological role, plays a role in virus budding by binding to the cell membrane and gathering the viral RNA into a nucleocapsid that forms the core of a mature virus particle. During virus entry, may induce genome penetration into the host cytoplasm after hemifusion induced by the surface proteins. Can migrate to the cell nucleus where it modulates host functions. Overcomes the anti-viral effects of host EXOC1 by sequestering and degrading the latter through the proteasome degradation pathway. Functionally, inhibits RNA silencing by interfering with host Dicer. Its function is as follows. Prevents premature fusion activity of envelope proteins in trans-Golgi by binding to envelope protein E at pH6.0. After virion release in extracellular space, gets dissociated from E dimers. Acts as a chaperone for envelope protein E during intracellular virion assembly by masking and inactivating envelope protein E fusion peptide. prM is the only viral peptide matured by host furin in the trans-Golgi network probably to avoid catastrophic activation of the viral fusion activity in acidic Golgi compartment prior to virion release. prM-E cleavage is inefficient, and many virions are only partially matured. These uncleaved prM would play a role in immune evasion. In terms of biological role, may play a role in virus budding. Exerts cytotoxic effects by activating a mitochondrial apoptotic pathway through M ectodomain. May display a viroporin activity. Functionally, binds to host cell surface receptor and mediates fusion between viral and cellular membranes. Envelope protein is synthesized in the endoplasmic reticulum in the form of heterodimer with protein prM. They play a role in virion budding in the ER, and the newly formed immature particle is covered with 60 spikes composed of heterodimer between precursor prM and envelope protein E. The virion is transported to the Golgi apparatus where the low pH causes dissociation of PrM-E heterodimers and formation of E homodimers. prM-E cleavage is inefficient, and many virions are only partially matured. These uncleaved prM would play a role in immune evasion. Its function is as follows. Involved in immune evasion, pathogenesis and viral replication. Once cleaved off the polyprotein, is targeted to three destinations: the viral replication cycle, the plasma membrane and the extracellular compartment. Essential for viral replication. Required for formation of the replication complex and recruitment of other non-structural proteins to the ER-derived membrane structures. Excreted as a hexameric lipoparticle that plays a role against host immune response. Antagonizing the complement function. Binds to the host macrophages and dendritic cells. Inhibits signal transduction originating from Toll-like receptor 3 (TLR3). Disrupts the host endothelial glycocalyx layer of host pulmonary microvascular endothelial cells, inducing degradation of sialic acid and shedding of heparan sulfate proteoglycans. NS1 induces expression of sialidases, heparanase, and activates cathepsin L, which activates heparanase via enzymatic cleavage. These effects are probably linked to the endothelial hyperpermeability observed in severe dengue disease. In terms of biological role, component of the viral RNA replication complex that functions in virion assembly and antagonizes the host immune response. Functionally, required cofactor for the serine protease function of NS3. May have membrane-destabilizing activity and form viroporins. Its function is as follows. Displays three enzymatic activities: serine protease, NTPase and RNA helicase. NS3 serine protease, in association with NS2B, performs its autocleavage and cleaves the polyprotein at dibasic sites in the cytoplasm: C-prM, NS2A-NS2B, NS2B-NS3, NS3-NS4A, NS4A-2K and NS4B-NS5. NS3 RNA helicase binds RNA and unwinds dsRNA in the 3' to 5' direction. Regulates the ATPase activity of the NS3 helicase activity. NS4A allows NS3 helicase to conserve energy during unwinding. Plays a role in the inhibition of the host innate immune response. Interacts with host MAVS and thereby prevents the interaction between RIGI and MAVS. In turn, IFN-beta production is impaired. Interacts with host AUP1 which mediates induction of lipophagy in host cells and facilitates production of virus progeny particles. In terms of biological role, functions as a signal peptide for NS4B and is required for the interferon antagonism activity of the latter. Functionally, induces the formation of ER-derived membrane vesicles where the viral replication takes place. Inhibits interferon (IFN)-induced host STAT1 phosphorylation and nuclear translocation, thereby preventing the establishment of cellular antiviral state by blocking the IFN-alpha/beta pathway. Its function is as follows. Replicates the viral (+) and (-) RNA genome, and performs the capping of genomes in the cytoplasm. NS5 methylates viral RNA cap at guanine N-7 and ribose 2'-O positions. Besides its role in RNA genome replication, also prevents the establishment of cellular antiviral state by blocking the interferon-alpha/beta (IFN-alpha/beta) signaling pathway. Inhibits host TYK2 and STAT2 phosphorylation, thereby preventing activation of JAK-STAT signaling pathway. This is Genome polyprotein from Dengue virus type 3 (strain China/80-2/1980) (DENV-3).